Here is an 865-residue protein sequence, read N- to C-terminus: Alanine--tRNA ligase (865 aa).

The Zn(2+) site is built by His-556, His-560, Cys-660, and His-664.

The protein belongs to the class-II aminoacyl-tRNA synthetase family. Zn(2+) is required as a cofactor.

It localises to the cytoplasm. It catalyses the reaction tRNA(Ala) + L-alanine + ATP = L-alanyl-tRNA(Ala) + AMP + diphosphate. Catalyzes the attachment of alanine to tRNA(Ala) in a two-step reaction: alanine is first activated by ATP to form Ala-AMP and then transferred to the acceptor end of tRNA(Ala). Also edits incorrectly charged Ser-tRNA(Ala) and Gly-tRNA(Ala) via its editing domain. This chain is Alanine--tRNA ligase, found in Vesicomyosocius okutanii subsp. Calyptogena okutanii (strain HA).